The chain runs to 247 residues: ATP synthase subunit a, chloroplastic (247 aa).

A run of 5 helical transmembrane segments spans residues 38–58 (QVLI…TIAV), 95–115 (VPFI…GALL), 134–154 (INTT…AGLT), 199–219 (LVVV…VMLL), and 220–240 (GLFT…AYIG).

It belongs to the ATPase A chain family. In terms of assembly, F-type ATPases have 2 components, CF(1) - the catalytic core - and CF(0) - the membrane proton channel. CF(1) has five subunits: alpha(3), beta(3), gamma(1), delta(1), epsilon(1). CF(0) has four main subunits: a, b, b' and c.

The protein resides in the plastid. It is found in the chloroplast thylakoid membrane. In terms of biological role, key component of the proton channel; it plays a direct role in the translocation of protons across the membrane. In Nicotiana sylvestris (Wood tobacco), this protein is ATP synthase subunit a, chloroplastic.